The following is a 357-amino-acid chain: MSLTRLLIKDFRNIENADLALSPGFNFLVGANGSGKTSVLEAIYTLGHGRAFRSLQPGRVIRHEQEAFVLHGRLQGEERETSIGLTKDKQGDSKVRIDGTDGHKIAELAHLMPMQLITPEGFTLLNGGPKYRRAFLDWGCFHNEAGFFTAWSNLKRLLKQRNAALRQVSRYEQLRPWDKELIPLAEQISTWRAEYSSAIAQDMADTCQQFLPEFSLTFSFQRGWEKETDYADVLERSFERDRMLTYTAHGPHKADFRIRADGAPVEDTLSRGQLKLLMCALRLAQGEFLTRESGRRCLYLIDDFASELDDARRGLLASRLKATQSQVFVSAISAEHVIDMSDENSKMFTVEKGKITD.

An ATP-binding site is contributed by 30-37 (GANGSGKT).

The protein belongs to the RecF family.

Its subcellular location is the cytoplasm. In terms of biological role, the RecF protein is involved in DNA metabolism; it is required for DNA replication and normal SOS inducibility. RecF binds preferentially to single-stranded, linear DNA. It also seems to bind ATP. This chain is DNA replication and repair protein RecF, found in Salmonella agona (strain SL483).